Reading from the N-terminus, the 165-residue chain is Xanthine-guanine phosphoribosyltransferase (165 aa).

Residues 41-42 and 98-106 contribute to the 5-phospho-alpha-D-ribose 1-diphosphate site; these read RG and DDLTDTGKT. Asp99 is a binding site for Mg(2+). The guanine site is built by Asp102 and Ile145. Positions 102 and 145 each coordinate xanthine. Residues 102–106 and 144–145 each bind GMP; these read DTGKT and WI.

This sequence belongs to the purine/pyrimidine phosphoribosyltransferase family. XGPT subfamily. Homotetramer. It depends on Mg(2+) as a cofactor.

It localises to the cell inner membrane. The catalysed reaction is GMP + diphosphate = guanine + 5-phospho-alpha-D-ribose 1-diphosphate. It carries out the reaction XMP + diphosphate = xanthine + 5-phospho-alpha-D-ribose 1-diphosphate. The enzyme catalyses IMP + diphosphate = hypoxanthine + 5-phospho-alpha-D-ribose 1-diphosphate. The protein operates within purine metabolism; GMP biosynthesis via salvage pathway; GMP from guanine: step 1/1. It participates in purine metabolism; XMP biosynthesis via salvage pathway; XMP from xanthine: step 1/1. Purine salvage pathway enzyme that catalyzes the transfer of the ribosyl-5-phosphate group from 5-phospho-alpha-D-ribose 1-diphosphate (PRPP) to the N9 position of the 6-oxopurines guanine and xanthine to form the corresponding ribonucleotides GMP (guanosine 5'-monophosphate) and XMP (xanthosine 5'-monophosphate), with the release of PPi. To a lesser extent, also acts on hypoxanthine. This chain is Xanthine-guanine phosphoribosyltransferase, found in Brucella suis (strain ATCC 23445 / NCTC 10510).